We begin with the raw amino-acid sequence, 218 residues long: Redox-sensing transcriptional repressor Rex (218 aa).

Residues 18–57 (LYYRFIQSLHASGKQRVSSAELSEAVKVDSATIRRDFSYF) constitute a DNA-binding region (H-T-H motif). 92–97 (GVGHLG) lines the NAD(+) pocket.

This sequence belongs to the transcriptional regulatory Rex family. Homodimer.

The protein resides in the cytoplasm. In terms of biological role, modulates transcription in response to changes in cellular NADH/NAD(+) redox state. This is Redox-sensing transcriptional repressor Rex from Exiguobacterium sp. (strain ATCC BAA-1283 / AT1b).